The sequence spans 177 residues: Probable inosine/xanthosine triphosphatase (177 aa).

Belongs to the YjjX NTPase family. Homodimer. Requires Mg(2+) as cofactor. Mn(2+) serves as cofactor.

The catalysed reaction is XTP + H2O = XDP + phosphate + H(+). The enzyme catalyses ITP + H2O = IDP + phosphate + H(+). Its function is as follows. Phosphatase that hydrolyzes non-canonical purine nucleotides such as XTP and ITP to their respective diphosphate derivatives. Probably excludes non-canonical purines from DNA/RNA precursor pool, thus preventing their incorporation into DNA/RNA and avoiding chromosomal lesions. The protein is Probable inosine/xanthosine triphosphatase of Pyrobaculum islandicum (strain DSM 4184 / JCM 9189 / GEO3).